Reading from the N-terminus, the 153-residue chain is MAKITGNLVATGLKFSIVTARFNDFINDKLLSGAVDTLVRHGAVESDIDTVWVPGAFEIPLVAKKMAESGKYDAVICLGTVIRGSTTHYDYVCNEVAKGIGAVALQTGVPIMFGVLTTESIEQAIERAGTKAGNKGAECALGAIEMVNVLKAL.

5-amino-6-(D-ribitylamino)uracil is bound by residues Phe22, 56–58 (AFE), and 80–82 (TVI). (2S)-2-hydroxy-3-oxobutyl phosphate is bound at residue 85-86 (ST). Residue His88 is the Proton donor of the active site. Residue Phe113 coordinates 5-amino-6-(D-ribitylamino)uracil. Residue Arg127 coordinates (2S)-2-hydroxy-3-oxobutyl phosphate.

This sequence belongs to the DMRL synthase family. As to quaternary structure, forms an icosahedral capsid composed of 60 subunits, arranged as a dodecamer of pentamers.

It carries out the reaction (2S)-2-hydroxy-3-oxobutyl phosphate + 5-amino-6-(D-ribitylamino)uracil = 6,7-dimethyl-8-(1-D-ribityl)lumazine + phosphate + 2 H2O + H(+). The protein operates within cofactor biosynthesis; riboflavin biosynthesis; riboflavin from 2-hydroxy-3-oxobutyl phosphate and 5-amino-6-(D-ribitylamino)uracil: step 1/2. Its function is as follows. Catalyzes the formation of 6,7-dimethyl-8-ribityllumazine by condensation of 5-amino-6-(D-ribitylamino)uracil with 3,4-dihydroxy-2-butanone 4-phosphate. This is the penultimate step in the biosynthesis of riboflavin. The polypeptide is 6,7-dimethyl-8-ribityllumazine synthase (Haemophilus ducreyi (strain 35000HP / ATCC 700724)).